The sequence spans 232 residues: 7-cyano-7-deazaguanine synthase (232 aa).

Residue Ala11–Ala21 participates in ATP binding. Zn(2+) is bound by residues Cys192, Cys200, Cys203, and Cys206.

Belongs to the QueC family. Requires Zn(2+) as cofactor.

The enzyme catalyses 7-carboxy-7-deazaguanine + NH4(+) + ATP = 7-cyano-7-deazaguanine + ADP + phosphate + H2O + H(+). It functions in the pathway purine metabolism; 7-cyano-7-deazaguanine biosynthesis. Catalyzes the ATP-dependent conversion of 7-carboxy-7-deazaguanine (CDG) to 7-cyano-7-deazaguanine (preQ(0)). This chain is 7-cyano-7-deazaguanine synthase, found in Haloarcula marismortui (strain ATCC 43049 / DSM 3752 / JCM 8966 / VKM B-1809) (Halobacterium marismortui).